The chain runs to 539 residues: Propionyl-CoA carboxylase beta chain, mitochondrial (539 aa).

Residues 1–28 (MAAAVRVTAARARLRVVVRSLHAGVRSL) constitute a mitochondrion transit peptide. The CoA carboxyltransferase N-terminal domain maps to 32–290 (PVSVNERIEN…SNQDPAPIRE (259 aa)). Positions 32–533 (PVSVNERIEN…SKKVQRPWRK (502 aa)) are carboxyltransferase. A Phosphoserine modification is found at Ser-71. Position 99 is an N6-acetyllysine; alternate (Lys-99). Lys-99 carries the N6-succinyllysine; alternate modification. Residues 294 to 533 (PSDRLVPELD…SKKVQRPWRK (240 aa)) form the CoA carboxyltransferase C-terminal domain. An acyl-CoA binding region spans residues 325-358 (DERDFFEIMPNYAKNIIVGFARMNGRTVGIVGNQ). N6-acetyllysine; alternate is present on residues Lys-474 and Lys-489. N6-succinyllysine; alternate is present on residues Lys-474 and Lys-489.

This sequence belongs to the AccD/PCCB family. In terms of assembly, the holoenzyme is a dodecamer composed of 6 PCCA/alpha subunits and 6 PCCB/beta subunits.

The protein localises to the mitochondrion matrix. It carries out the reaction propanoyl-CoA + hydrogencarbonate + ATP = (S)-methylmalonyl-CoA + ADP + phosphate + H(+). The enzyme catalyses butanoyl-CoA + hydrogencarbonate + ATP = (2S)-ethylmalonyl-CoA + ADP + phosphate + H(+). It participates in metabolic intermediate metabolism; propanoyl-CoA degradation; succinyl-CoA from propanoyl-CoA: step 1/3. In terms of biological role, this is one of the 2 subunits of the biotin-dependent propionyl-CoA carboxylase (PCC), a mitochondrial enzyme involved in the catabolism of odd chain fatty acids, branched-chain amino acids isoleucine, threonine, methionine, and valine and other metabolites. Propionyl-CoA carboxylase catalyzes the carboxylation of propionyl-CoA/propanoyl-CoA to D-methylmalonyl-CoA/(S)-methylmalonyl-CoA. Within the holoenzyme, the alpha subunit catalyzes the ATP-dependent carboxylation of the biotin carried by the biotin carboxyl carrier (BCC) domain, while the beta subunit then transfers the carboxyl group from carboxylated biotin to propionyl-CoA. Propionyl-CoA carboxylase also significantly acts on butyryl-CoA/butanoyl-CoA, which is converted to ethylmalonyl-CoA/(2S)-ethylmalonyl-CoA at a much lower rate. Other alternative minor substrates include (2E)-butenoyl-CoA/crotonoyl-CoA. The polypeptide is Propionyl-CoA carboxylase beta chain, mitochondrial (Sus scrofa (Pig)).